Consider the following 199-residue polypeptide: Large ribosomal subunit protein uL13A (199 aa).

Serine 2 carries the N-acetylserine modification. Lysine 177 participates in a covalent cross-link: Glycyl lysine isopeptide (Lys-Gly) (interchain with G-Cter in ubiquitin).

This sequence belongs to the universal ribosomal protein uL13 family. As to quaternary structure, component of the large ribosomal subunit (LSU). Mature yeast ribosomes consist of a small (40S) and a large (60S) subunit. The 40S small subunit contains 1 molecule of ribosomal RNA (18S rRNA) and 33 different proteins (encoded by 57 genes). The large 60S subunit contains 3 rRNA molecules (25S, 5.8S and 5S rRNA) and 46 different proteins (encoded by 81 genes). In terms of processing, N-terminally acetylated by acetyltransferase NatA.

The protein localises to the cytoplasm. In terms of biological role, component of the ribosome, a large ribonucleoprotein complex responsible for the synthesis of proteins in the cell. The small ribosomal subunit (SSU) binds messenger RNAs (mRNAs) and translates the encoded message by selecting cognate aminoacyl-transfer RNA (tRNA) molecules. The large subunit (LSU) contains the ribosomal catalytic site termed the peptidyl transferase center (PTC), which catalyzes the formation of peptide bonds, thereby polymerizing the amino acids delivered by tRNAs into a polypeptide chain. The nascent polypeptides leave the ribosome through a tunnel in the LSU and interact with protein factors that function in enzymatic processing, targeting, and the membrane insertion of nascent chains at the exit of the ribosomal tunnel. In Saccharomyces cerevisiae (strain ATCC 204508 / S288c) (Baker's yeast), this protein is Large ribosomal subunit protein uL13A.